The primary structure comprises 91 residues: MKISAAALTIILTAAALCTPAPASPYGSDTTPCCFAYLSLALPRAHVKEYFYTSSKCSNLAVVFVTRRNRQVCANPEKKWVQEYINYLEMS.

A signal peptide spans 1–23 (MKISAAALTIILTAAALCTPAPA). 2 cysteine pairs are disulfide-bonded: Cys-33-Cys-57 and Cys-34-Cys-73.

Belongs to the intercrine beta (chemokine CC) family. T-cell and macrophage specific.

The protein localises to the secreted. In terms of biological role, chemoattractant for blood monocytes, memory T-helper cells and eosinophils. Causes the release of histamine from basophils and activates eosinophils. May activate several chemokine receptors including CCR1, CCR3, CCR4 and CCR5. May also be an agonist of the G protein-coupled receptor GPR75. Together with GPR75, may play a role in neuron survival through activation of a downstream signaling pathway involving the PI3, Akt and MAP kinases. By activating GPR75 may also play a role in insulin secretion by islet cells. This chain is C-C motif chemokine 5 (Ccl5), found in Mus musculus (Mouse).